A 343-amino-acid chain; its full sequence is Anthranilate phosphoribosyltransferase (343 aa).

5-phospho-alpha-D-ribose 1-diphosphate contacts are provided by residues glycine 83, 86–87 (GD), threonine 91, 93–96 (NIST), 111–119 (KHGGRSVSS), and serine 123. Glycine 83 provides a ligand contact to anthranilate. Position 95 (serine 95) interacts with Mg(2+). Arginine 169 serves as a coordination point for anthranilate. Positions 228 and 229 each coordinate Mg(2+).

The protein belongs to the anthranilate phosphoribosyltransferase family. As to quaternary structure, homodimer. Mg(2+) is required as a cofactor.

The catalysed reaction is N-(5-phospho-beta-D-ribosyl)anthranilate + diphosphate = 5-phospho-alpha-D-ribose 1-diphosphate + anthranilate. The protein operates within amino-acid biosynthesis; L-tryptophan biosynthesis; L-tryptophan from chorismate: step 2/5. Functionally, catalyzes the transfer of the phosphoribosyl group of 5-phosphorylribose-1-pyrophosphate (PRPP) to anthranilate to yield N-(5'-phosphoribosyl)-anthranilate (PRA). This Thiobacillus denitrificans (strain ATCC 25259 / T1) protein is Anthranilate phosphoribosyltransferase.